Reading from the N-terminus, the 1098-residue chain is MASCWRLILFLSVTRWLSDYSEALSGLSTSYAALLRIKKSSTSPFGSKSRPRFSSPSLGTISVSPPSWRGAAQQYHSPGNLYHSSDAFRQDESVDYGPVFVQEPDDVIFPTDSDEKKVALNCEVRGNPSPSYRWLRNGTEIALESDYRYSLIDGTFIISNPSELRDSGLYQCLATNSFGSILSREATLQFAYLGNFSGRTRSAVSVREGQGVVLMCSPPPHSPEIIYSWVFNEFPSFVAEDSRRFISQETGNLYISKVQTSDVGSYICLVKNAVTNARVLSPPTPLTLRNDGVMGEYEPKIEVHFPFTVTAAKGTTVKMECFALGNPVPTITWMKVNGYIPSKSRLRKSQAVLEIPNLQLDDAGIYECTAENSRGKNSFRGQLQIFTYPHWVQKLNDTQLDSGSPLQWECKATGKPRPTYRWLKNGAPLLPQSRVDTVNGILAIQSVNQSDAGMYQCLAENKYGAIYASAELKILASPPSFELNQVKKSIIVTKDRGVLIECEPQGSPKPAISWRKGDKAVRANKRIAILPDGSLRILNASKADEGKYICQGVNIFGSAEIIASLSVKEPTRIELTPKRTELTVGESIVLNCKAIHDASLDVTFYWTLKGQPIDFEKEGGHFENIRAQASSADLMIRNILLMHAGRYGCRVQTTADSVSDEAELLVRGPPGPPGVVIVEEITESTATLSWSPATDNHSPISSYNLQARSPFSLGWQTVKTVPEVITGDMESAMAVDLNPWVEYEFRVVATNPIGTGDPSIPSRMIRTNEAVPKTAPSNVSGRSGRRHELVIAWEPVSEEFQNGEGFGYIVAFRPNGTRGWKEKMVTSSEASKFIYRDESVPPLTPFEVKVGVYNNKGDGPFSQIVVICSAEGEPTAAPTDVTATSVSVSEIFVVWKHVKESLGRPQGFEISYWKDTEPEDSVETVRTRGNESFVMLTGLEGNTLYHLTVRAYNGAGYGPPSREASTTTKRHPPREPPGNLRWEQQGSQVSLGWEPVRPLANESEVMGYKVFYRQEGHSEGQVIETQKPQAVVPLPEAGVYIIEVRAYSEGGDGTASSQIRVPSYSGGKITSAQSTLHSLSKWSSVTLLLALMLPSSSW.

The signal sequence occupies residues 1–23 (MASCWRLILFLSVTRWLSDYSEA). Ig-like C2-type domains follow at residues 98-189 (PVFV…ATLQ), 195-281 (NFSG…RVLS), 299-384 (PKIE…GQLQ), 389-473 (PHWV…AELK), 479-568 (PSFE…LSVK), and 570-659 (PTRI…DSVS). Cys122 and Cys172 are joined by a disulfide. Residues Asn137 and Asn195 are each glycosylated (N-linked (GlcNAc...) asparagine). Cystine bridges form between Cys216–Cys268 and Cys321–Cys368. N-linked (GlcNAc...) asparagine glycans are attached at residues Asn396, Asn448, and Asn539. 3 disulfide bridges follow: Cys410–Cys457, Cys502–Cys550, and Cys592–Cys649. Fibronectin type-III domains follow at residues 672 to 770 (PPGV…TNEA), 775 to 872 (APSN…SAEG), 877 to 971 (APTD…TKRH), and 976 to 1066 (PPGN…SYSG). Residues Asn778, Asn815, and Asn930 are each glycosylated (N-linked (GlcNAc...) asparagine). Residues 956–982 (GYGPPSREASTTTKRHPPREPPGNLRW) are disordered. An N-linked (GlcNAc...) asparagine glycan is attached at Asn1001. Ser1071 carries the GPI-anchor amidated serine lipid modification. Positions 1072 to 1098 (AQSTLHSLSKWSSVTLLLALMLPSSSW) are cleaved as a propeptide — removed in mature form.

This sequence belongs to the immunoglobulin superfamily. Contactin family. Interacts with PTPRG. In terms of tissue distribution, expressed in the nervous system. Preferentially expressed in the central auditory pathways.

The protein resides in the cell membrane. Its function is as follows. Contactins mediate cell surface interactions during nervous system development. Has some neurite outgrowth-promoting activity in the cerebral cortical neurons but not in hippocampal neurons. Involved in neuronal activity in the auditory system. In Mus musculus (Mouse), this protein is Contactin-5 (Cntn5).